A 441-amino-acid polypeptide reads, in one-letter code: Trigger factor (441 aa).

The region spanning 161–246 (GDMVTVDFQG…VKDVKERILA (86 aa)) is the PPIase FKBP-type domain.

Belongs to the FKBP-type PPIase family. Tig subfamily.

It localises to the cytoplasm. The enzyme catalyses [protein]-peptidylproline (omega=180) = [protein]-peptidylproline (omega=0). Its function is as follows. Involved in protein export. Acts as a chaperone by maintaining the newly synthesized protein in an open conformation. Functions as a peptidyl-prolyl cis-trans isomerase. This is Trigger factor from Desulfotalea psychrophila (strain LSv54 / DSM 12343).